We begin with the raw amino-acid sequence, 146 residues long: 3-dehydroquinate dehydratase (146 aa).

Residue Tyr23 is the Proton acceptor of the active site. Residues Asn74, His80, and Asp87 each contribute to the substrate site. The Proton donor role is filled by His100. Substrate contacts are provided by residues Ile101–Ser102 and Arg111.

It belongs to the type-II 3-dehydroquinase family. As to quaternary structure, homododecamer.

The catalysed reaction is 3-dehydroquinate = 3-dehydroshikimate + H2O. The protein operates within metabolic intermediate biosynthesis; chorismate biosynthesis; chorismate from D-erythrose 4-phosphate and phosphoenolpyruvate: step 3/7. Catalyzes a trans-dehydration via an enolate intermediate. This chain is 3-dehydroquinate dehydratase, found in Bacillus cereus (strain G9842).